The chain runs to 119 residues: Basic phospholipase A2 acanthin-1 (119 aa).

7 disulfide bridges follow: C11–C71, C27–C118, C29–C45, C44–C99, C51–C92, C60–C85, and C78–C90. Residues Y28, G30, and G32 each coordinate Ca(2+). H48 is an active-site residue. Residue D49 participates in Ca(2+) binding. D93 is an active-site residue.

Requires Ca(2+) as cofactor. As to expression, expressed by the venom gland.

The protein localises to the secreted. The enzyme catalyses a 1,2-diacyl-sn-glycero-3-phosphocholine + H2O = a 1-acyl-sn-glycero-3-phosphocholine + a fatty acid + H(+). Its function is as follows. Snake venom phospholipase A2 (PLA2) that potently inhibits ADP-(IC(50)=10 nM) and collagen-induced (IC(50)=7 nM) platelet aggregation when tested on human whole blood. PLA2 catalyzes the calcium-dependent hydrolysis of the 2-acyl groups in 3-sn-phosphoglycerides. This Acanthophis antarcticus (Common death adder) protein is Basic phospholipase A2 acanthin-1.